The primary structure comprises 320 residues: Ferrochelatase (320 aa).

Residues His-194 and Glu-275 each coordinate Fe cation.

Belongs to the ferrochelatase family. As to quaternary structure, monomer.

Its subcellular location is the cytoplasm. It catalyses the reaction heme b + 2 H(+) = protoporphyrin IX + Fe(2+). The protein operates within porphyrin-containing compound metabolism; protoheme biosynthesis; protoheme from protoporphyrin-IX: step 1/1. Its function is as follows. Catalyzes the ferrous insertion into protoporphyrin IX. In Escherichia coli O8 (strain IAI1), this protein is Ferrochelatase.